The chain runs to 201 residues: Alpha-1-acid glycoprotein 1 (201 aa).

A signal peptide spans 1–18; that stretch reads MALSWVLTVLSLLPLLEA. Q19 carries the post-translational modification Pyrrolidone carboxylic acid. Intrachain disulfides connect C23–C165 and C90–C183. N33 carries N-linked (GlcNAc...) (complex) asparagine glycosylation. An N-linked (GlcNAc...) asparagine glycan is attached at N56. A glycan (N-linked (GlcNAc...) (complex) asparagine) is linked at N72. N93 and N103 each carry an N-linked (GlcNAc...) asparagine glycan.

Belongs to the calycin superfamily. Lipocalin family. N-glycosylated. N-glycan heterogeneity at Asn-33: Hex5HexNAc4 (minor), Hex6HexNAc5 (major) and dHex1Hex6HexNAc5 (minor). As to expression, expressed by the liver and secreted in plasma.

Its subcellular location is the secreted. Functions as a transport protein in the blood stream. Binds various ligands in the interior of its beta-barrel domain. Also binds synthetic drugs and influences their distribution and availability in the body. Appears to function in modulating the activity of the immune system during the acute-phase reaction. The chain is Alpha-1-acid glycoprotein 1 (ORM1) from Homo sapiens (Human).